A 229-amino-acid polypeptide reads, in one-letter code: Aquaporin Z (229 aa).

A run of 2 helical transmembrane segments spans residues 8 to 28 (FFGTFWLVLGGCGSAVLAAGV) and 33 to 53 (IGYLGVALAFGLSVLTMAYAI). Positions 62–64 (NPA) match the NPA 1 motif. 3 consecutive transmembrane segments (helical) span residues 81–101 (LPYVVAQVLGGLAAGGVLYLI), 131–151 (AALVSEVVLTGMFLLIILGAT), and 158–178 (GFAPIAIGLTLTLIHLISIPV). Positions 184–186 (NPA) match the NPA 2 motif. The chain crosses the membrane as a helical span at residues 199–219 (AVSQLWLFWVAPILGAVLGAL).

It belongs to the MIP/aquaporin (TC 1.A.8) family. As to quaternary structure, homotetramer.

It localises to the cell inner membrane. It carries out the reaction H2O(in) = H2O(out). Functionally, channel that permits osmotically driven movement of water in both directions. It is involved in the osmoregulation and in the maintenance of cell turgor during volume expansion in rapidly growing cells. It mediates rapid entry or exit of water in response to abrupt changes in osmolarity. This is Aquaporin Z from Pseudomonas aeruginosa (strain ATCC 15692 / DSM 22644 / CIP 104116 / JCM 14847 / LMG 12228 / 1C / PRS 101 / PAO1).